The following is a 222-amino-acid chain: Fibrillarin-like rRNA/tRNA 2'-O-methyltransferase (222 aa).

S-adenosyl-L-methionine contacts are provided by residues 86 to 87 (TT), 104 to 105 (EV), 129 to 130 (DA), and 149 to 152 (DISQ).

This sequence belongs to the methyltransferase superfamily. Fibrillarin family. In terms of assembly, interacts with nop5. Component of box C/D small ribonucleoprotein (sRNP) particles that contain rpl7ae, FlpA and nop5, plus a guide RNA.

Its function is as follows. Involved in pre-rRNA and tRNA processing. Utilizes the methyl donor S-adenosyl-L-methionine to catalyze the site-specific 2'-hydroxyl methylation of ribose moieties in rRNA and tRNA. Site specificity is provided by a guide RNA that base pairs with the substrate. Methylation occurs at a characteristic distance from the sequence involved in base pairing with the guide RNA. The polypeptide is Fibrillarin-like rRNA/tRNA 2'-O-methyltransferase (Thermoplasma volcanium (strain ATCC 51530 / DSM 4299 / JCM 9571 / NBRC 15438 / GSS1)).